We begin with the raw amino-acid sequence, 828 residues long: DNA gyrase subunit A (828 aa).

One can recognise a Topo IIA-type catalytic domain in the interval 32 to 497 (LPDVRDGLKP…EVLSLEDEDL (466 aa)). Y120 acts as the O-(5'-phospho-DNA)-tyrosine intermediate in catalysis. The GyrA-box signature appears at 524 to 530 (QKRGGRG).

Belongs to the type II topoisomerase GyrA/ParC subunit family. In terms of assembly, heterotetramer, composed of two GyrA and two GyrB chains. In the heterotetramer, GyrA contains the active site tyrosine that forms a transient covalent intermediate with DNA, while GyrB binds cofactors and catalyzes ATP hydrolysis.

It is found in the cytoplasm. The enzyme catalyses ATP-dependent breakage, passage and rejoining of double-stranded DNA.. Its function is as follows. A type II topoisomerase that negatively supercoils closed circular double-stranded (ds) DNA in an ATP-dependent manner to modulate DNA topology and maintain chromosomes in an underwound state. Negative supercoiling favors strand separation, and DNA replication, transcription, recombination and repair, all of which involve strand separation. Also able to catalyze the interconversion of other topological isomers of dsDNA rings, including catenanes and knotted rings. Type II topoisomerases break and join 2 DNA strands simultaneously in an ATP-dependent manner. This chain is DNA gyrase subunit A, found in Streptococcus pyogenes serotype M18 (strain MGAS8232).